Here is a 209-residue protein sequence, read N- to C-terminus: Large ribosomal subunit protein uL4 (209 aa).

The disordered stretch occupies residues 44–77 (QRQGTHKSKERSEVSGSTRKLIRQKGGGGARRGD).

Belongs to the universal ribosomal protein uL4 family. As to quaternary structure, part of the 50S ribosomal subunit.

One of the primary rRNA binding proteins, this protein initially binds near the 5'-end of the 23S rRNA. It is important during the early stages of 50S assembly. It makes multiple contacts with different domains of the 23S rRNA in the assembled 50S subunit and ribosome. In terms of biological role, forms part of the polypeptide exit tunnel. The sequence is that of Large ribosomal subunit protein uL4 from Parabacteroides distasonis (strain ATCC 8503 / DSM 20701 / CIP 104284 / JCM 5825 / NCTC 11152).